The following is a 556-amino-acid chain: Phospholipase D (556 aa).

The N-terminal stretch at 1–47 (MTSDQRPARLPTHKGKLLAPHRLHRLIPVSVALTTVCAALPSSTAYA) is a signal peptide. The region spanning 210-237 (SLSWNHSKLLVVDGKTAITGGINGWKDD) is the PLD phosphodiesterase 1 domain. Residues 326–360 (SDPSSGYHPDLPTAPDTKCTVGLHDNTNADRDYDT) are disordered. The PLD phosphodiesterase 2 domain occupies 484 to 511 (KPYALHHKLVSVDDSAFYIGSKNLYPAW).

Belongs to the phospholipase D family. Post-translationally, probably has at least 1 disulfide bond.

Its subcellular location is the secreted. It carries out the reaction a 1,2-diacyl-sn-glycero-3-phosphocholine + H2O = a 1,2-diacyl-sn-glycero-3-phosphate + choline + H(+). Inhibited by mercaptoethanol and dithiothreitol. Functionally, a reversible phospholipase active on phosphatidylcholine (PC) and phosphatidylethanolamine. Lysophosphatidylcholine and egg sphingomyelin are hydrolyzed about 50 times and 100 times more slowly than PC, respectively. During the transphosphatidylation reaction straight-chain hydroxy compounds, such as triethyleneglycol and triethyleneglycol monomethyl ether, were phosphatidylated in good yield, as were monosaccharides. Disaccharides and sugar alcohol reacted slowly, while N-acetyl-D-galactosamine, D-galactosamine and D-galacturonic acid were not phosphatidylated. The polypeptide is Phospholipase D (Streptomyces antibioticus).